The chain runs to 326 residues: MGTVKCIGILTSGGDAPGMNAAIRAVTRAAIYNGLQVKGIYRGYKGLVTGEIKEFKSQNVSNIIQLGGTILKTARCKEFTTPEGRQLAYDNMKREGIDALVIIGGDGSLTGARIFAQEFDVPCIGLPGTIDNDLYGTDTTIGYDTALNTILDAVDKIRDTATSHERLFFVEVMGRDAGFLALNGAIASGAEAAIIPEFSTEVDQLEEFIKNGFRKSKNSSIVLVAESELTGGAMHYAERVKNEYPQYDVRVTILGHLQRGGSPTAHDRILASRLGAAAIDAIMEDQRNVMIGIEHDEIVYVPFSKAIKNDKPVKRDLVNVLKELSI.

Glycine 14 contributes to the ATP binding site. Residue 24-28 coordinates ADP; that stretch reads RAVTR. Residues 75-76 and 105-108 each bind ATP; these read RC and GDGS. Position 106 (aspartate 106) interacts with Mg(2+). 129-131 serves as a coordination point for substrate; that stretch reads TID. Aspartate 131 serves as the catalytic Proton acceptor. Arginine 158 is a binding site for ADP. Substrate-binding positions include arginine 166 and 173–175; that span reads MGR. ADP is bound by residues 189–191, lysine 215, and 217–219; these read GAE and KNS. Substrate-binding positions include glutamate 226, arginine 250, and 256-259; that span reads HLQR.

Belongs to the phosphofructokinase type A (PFKA) family. ATP-dependent PFK group I subfamily. Prokaryotic clade 'B1' sub-subfamily. In terms of assembly, homotetramer. The cofactor is Mg(2+).

It localises to the cytoplasm. It catalyses the reaction beta-D-fructose 6-phosphate + ATP = beta-D-fructose 1,6-bisphosphate + ADP + H(+). It functions in the pathway carbohydrate degradation; glycolysis; D-glyceraldehyde 3-phosphate and glycerone phosphate from D-glucose: step 3/4. With respect to regulation, allosterically activated by ADP and other diphosphonucleosides, and allosterically inhibited by phosphoenolpyruvate. Catalyzes the phosphorylation of D-fructose 6-phosphate to fructose 1,6-bisphosphate by ATP, the first committing step of glycolysis. The protein is ATP-dependent 6-phosphofructokinase 2 of Bacteroides thetaiotaomicron (strain ATCC 29148 / DSM 2079 / JCM 5827 / CCUG 10774 / NCTC 10582 / VPI-5482 / E50).